We begin with the raw amino-acid sequence, 464 residues long: Cysteine--tRNA ligase (464 aa).

C27 is a binding site for Zn(2+). The 'HIGH' region motif lies at P29–H39. Positions 203, 234, and 238 each coordinate Zn(2+). Residues K266–S270 carry the 'KMSKS' region motif. K269 lines the ATP pocket.

This sequence belongs to the class-I aminoacyl-tRNA synthetase family. Monomer. The cofactor is Zn(2+).

It localises to the cytoplasm. It carries out the reaction tRNA(Cys) + L-cysteine + ATP = L-cysteinyl-tRNA(Cys) + AMP + diphosphate. In Campylobacter concisus (strain 13826), this protein is Cysteine--tRNA ligase.